The chain runs to 208 residues: MKVVEVKHPLVRHKIGLMREADISTKRFRELAAEVGSLLTYEATADLETETVTIEGWNGPVQVEQIKGKKVTVVPILRAGLGMMDGVLEHIPSARISVVGIYRDEETLEPVPYFEKLCSQVDERIALVVDPMLATGGSMISTIDLLKQRGCKQIKALVLVAAPEGLAALEKAHPDIELYTASIDRCLNENGYILPGLGDAGDKIFGTK.

5-phospho-alpha-D-ribose 1-diphosphate contacts are provided by residues Arg78, Arg103, and 130–138 (DPMLATGGS). Residues Ile193 and 198–200 (GDA) each bind uracil. Asp199 contacts 5-phospho-alpha-D-ribose 1-diphosphate.

Belongs to the UPRTase family. The cofactor is Mg(2+).

The enzyme catalyses UMP + diphosphate = 5-phospho-alpha-D-ribose 1-diphosphate + uracil. It functions in the pathway pyrimidine metabolism; UMP biosynthesis via salvage pathway; UMP from uracil: step 1/1. Allosterically activated by GTP. In terms of biological role, catalyzes the conversion of uracil and 5-phospho-alpha-D-ribose 1-diphosphate (PRPP) to UMP and diphosphate. In Shewanella amazonensis (strain ATCC BAA-1098 / SB2B), this protein is Uracil phosphoribosyltransferase.